A 366-amino-acid chain; its full sequence is Flagellar P-ring protein (366 aa).

The N-terminal stretch at Met-1–Ala-19 is a signal peptide.

The protein belongs to the FlgI family. The basal body constitutes a major portion of the flagellar organelle and consists of four rings (L,P,S, and M) mounted on a central rod.

The protein resides in the periplasm. Its subcellular location is the bacterial flagellum basal body. Assembles around the rod to form the L-ring and probably protects the motor/basal body from shearing forces during rotation. The protein is Flagellar P-ring protein of Ruegeria pomeroyi (strain ATCC 700808 / DSM 15171 / DSS-3) (Silicibacter pomeroyi).